The sequence spans 657 residues: MGSDRSALGRPGCTGSCLSSRASLLPLLLVLLDCLGHGTASKDAEVYAAENWLRLYGYLPQPSRHMSTMRSAQILASALAEMQSFYGIPVTGVLDEETKTWMKRPRCGVPDQFGVHVKANLRRRRKRYTLTGKAWNNYHLTFSIQNYTEKLGWYNSMEAVRRAFQVWEQVTPLVFQEVSYDDIRLRRRAEADIMVLFASGFHGDSSPFDGVGGFLAHAYFPGPGLGGDTHFDADEPWTFSSTDLHGISLFLVAVHELGHALGLEHSSNPSAIMAPFYQWMDTDNFQLPEDDLRGIQQLYGSPDGKPQPTRPLPTVRPRRPGRPDHQPPRPPQPPHPGGKPERPPKPGPPPQPRATERPDQYGPNICDGNFDTVAVLRGEMFVFKGRWFWRVRHNRVLDNYPMPIGHFWRGLPGNISAAYERQDGHFVFFKGNRYWLFREANLEPGYPQPLSSYGTDIPYDRIDTAIWWEPTGHTFFFQADRYWRFNEETQHGDPGYPKPISVWQGIPTSPKGAFLSNDAAYTYFYKGTKYWKFNNERLRMEPGHPKSILRDFMGCQEHVEPRSRWPDVARPPFNPNGGAEPEADGDSKEENAGDKDEGSRVVVQMEEVVRTVNVVMVLVPLLLLLCILGLAFALVQMQRKGAPRMLLYCKRSLQEWV.

The first 36 residues, 1–36, serve as a signal peptide directing secretion; it reads MGSDRSALGRPGCTGSCLSSRASLLPLLLVLLDCLG. The propeptide occupies 37–127; it reads HGTASKDAEV…KANLRRRRKR (91 aa). Positions 105–112 match the Cysteine switch motif; sequence PRCGVPDQ. Residue cysteine 107 participates in Zn(2+) binding. Residues 128–614 are Extracellular-facing; sequence YTLTGKAWNN…MEEVVRTVNV (487 aa). Asparagine 146 carries N-linked (GlcNAc...) asparagine glycosylation. Histidine 255 serves as a coordination point for Zn(2+). Glutamate 256 is an active-site residue. Zn(2+) contacts are provided by histidine 259 and histidine 265. The tract at residues 295-365 is disordered; sequence IQQLYGSPDG…ERPDQYGPNI (71 aa). Pro residues predominate over residues 328–337; it reads PRPPQPPHPG. Hemopexin repeat units lie at residues 363 to 411, 412 to 457, 459 to 507, and 508 to 555; these read PNIC…WRGL, PGNI…GTDI, YDRI…QGIP, and TSPK…FMGC. Cysteine 366 and cysteine 555 are joined by a disulfide. Residue asparagine 414 is glycosylated (N-linked (GlcNAc...) asparagine). The disordered stretch occupies residues 561–599; it reads PRSRWPDVARPPFNPNGGAEPEADGDSKEENAGDKDEGS. Residues 585–599 show a composition bias toward basic and acidic residues; the sequence is GDSKEENAGDKDEGS. Residues 615-635 form a helical membrane-spanning segment; it reads VMVLVPLLLLLCILGLAFALV. The Cytoplasmic portion of the chain corresponds to 636 to 657; it reads QMQRKGAPRMLLYCKRSLQEWV.

This sequence belongs to the peptidase M10A family. The cofactor is Zn(2+). It depends on Ca(2+) as a cofactor. The precursor is cleaved by a furin endopeptidase.

Its subcellular location is the membrane. Endopeptidase that degrades various components of the extracellular matrix. May activate progelatinase A. In Mus musculus (Mouse), this protein is Matrix metalloproteinase-15 (Mmp15).